Consider the following 348-residue polypeptide: Phospho-N-acetylmuramoyl-pentapeptide-transferase (348 aa).

The next 10 membrane-spanning stretches (helical) occupy residues 11–31 (SLIL…IFLG), 67–87 (TAGG…LLPL), 92–112 (TWLF…DDIV), 128–148 (FIVQ…IDKE), 163–183 (IFLG…MLAI), 198–218 (GLAT…AIMS), 222–242 (PLAY…LAFL), 251–271 (VFMG…CAVM), 276–296 (LFLI…ILQV), and 326–346 (VVAR…VAAL).

The protein belongs to the glycosyltransferase 4 family. MraY subfamily. It depends on Mg(2+) as a cofactor.

It localises to the cell inner membrane. It carries out the reaction UDP-N-acetyl-alpha-D-muramoyl-L-alanyl-gamma-D-glutamyl-meso-2,6-diaminopimeloyl-D-alanyl-D-alanine + di-trans,octa-cis-undecaprenyl phosphate = di-trans,octa-cis-undecaprenyl diphospho-N-acetyl-alpha-D-muramoyl-L-alanyl-D-glutamyl-meso-2,6-diaminopimeloyl-D-alanyl-D-alanine + UMP. It functions in the pathway cell wall biogenesis; peptidoglycan biosynthesis. Catalyzes the initial step of the lipid cycle reactions in the biosynthesis of the cell wall peptidoglycan: transfers peptidoglycan precursor phospho-MurNAc-pentapeptide from UDP-MurNAc-pentapeptide onto the lipid carrier undecaprenyl phosphate, yielding undecaprenyl-pyrophosphoryl-MurNAc-pentapeptide, known as lipid I. This Chlamydia felis (strain Fe/C-56) (Chlamydophila felis) protein is Phospho-N-acetylmuramoyl-pentapeptide-transferase.